A 230-amino-acid polypeptide reads, in one-letter code: uncharacterized protein (230 aa).

10-34 (VVTGASSGIGEAIAKKLSQQGASIV) is an NADP(+) binding site. Serine 139 is a substrate binding site. Tyrosine 152 (proton acceptor) is an active-site residue.

The protein belongs to the short-chain dehydrogenases/reductases (SDR) family.

This is an uncharacterized protein from Staphylococcus epidermidis (strain ATCC 12228 / FDA PCI 1200).